Consider the following 578-residue polypeptide: MYGIDIELSDYRIGSETISSGDDGYYEGCACDKDASTNAYSYDKCRVVRGTWRPSELVLYVGDEHVACRDVASGMHHGNLPGKVYFIEAEAGRAATAEGGVYTTVVEALSLVQEEEGTGMYLINAPEKAVVRFFKIEKSAAEEPQTVDPSVVESATGSGVDTQEEQEIDQEAPAIEEVETEEQEVILEEGTLIDLEQPVAQVPVVAEAELPGVEAAEAIVPSLEENKLQEVVVAPEAQQLESAPEVSAPAQPESTVLGVAEGDLKSEVSVEANADVAQKEVISGQQEQEIAEALEGTEAPVEVKEETEVLLKEDTLIDLEQPVAQVPVVAEAELPGVEAAEAIVPSLEENKLQEVVVAPEAQQLESAPEVSAPAQPESTVLGVTEGDLKSEVSVEADAGMQQEAGISDQETQATEEVEKVEVSVETKTEEPEVILEEGTLIDLEQPVAQVPVVAEAELPGVEAAEAIVPSLEENKLQEVVVAPEAQQLESAPEVSAPVQPESTVLGVTEGDLKSEVSVEADAGMQQEAGISDQETQATEEVEKVEVSVEADAGMQQELVDVPTALPLKDPDDEDVLSY.

The interval 144–169 (PQTVDPSVVESATGSGVDTQEEQEID) is disordered. Tandem repeats lie at residues 180-272 (TEEQ…SVEA), 304-425 (KEET…VSVE), and 428-557 (TEEP…MQQE). The interval 180-557 (TEEQEVILEE…VEADAGMQQE (378 aa)) is 3 X approximate tandem repeats. The segment at 516–578 (VSVEADAGMQ…DPDDEDVLSY (63 aa)) is disordered.

In terms of processing, polysumoylated during infection on at least two lysine residues, in the N- and C-terminal section. SUMO2/3 modification of AmpA throughout the infection cycle is likely critical for bacterial intracellular survival, while terminal SUMO1 conjugation of AmpA may promote a late-stage infection cycle event. Only a small portion of the available AmpA pool is actually SUMOylated at any given time.

Its subcellular location is the secreted. It is found in the host membrane. The protein resides in the host cytoplasm. It localises to the host cytosol. Functionally, secreted effector that hijacks host cell SUMOylation during A.phagocytophilum infection and is important for the pathogen's intracellular survival. In Anaplasma phagocytophilum (strain HZ), this protein is SUMOylated effector protein AmpA.